The following is a 144-amino-acid chain: Large ribosomal subunit protein uL15 (144 aa).

The segment at 1-53 (MRLNTLSPAEGSKHASKRLGRGIGSGLGKTGGRGHKGQKSRSGGGVRRGFEGG) is disordered. Residues 21–31 (RGIGSGLGKTG) are compositionally biased toward gly residues.

It belongs to the universal ribosomal protein uL15 family. As to quaternary structure, part of the 50S ribosomal subunit.

In terms of biological role, binds to the 23S rRNA. The chain is Large ribosomal subunit protein uL15 from Edwardsiella ictaluri (strain 93-146).